A 528-amino-acid chain; its full sequence is Carboxysome shell carbonic anhydrase (528 aa).

A disordered region spans residues 17–47 (PIAPNPRWQKENPTAHGSTDTGGFGYNGGNE). A Zn(2+)-binding site is contributed by cysteine 184. The Proton acceptor role is filled by aspartate 186. Positions 252 and 263 each coordinate Zn(2+).

This sequence belongs to the beta-class carbonic anhydrase family. CsoSCA subfamily. In terms of assembly, homodimer. Zn(2+) is required as a cofactor.

The protein resides in the carboxysome. It carries out the reaction hydrogencarbonate + H(+) = CO2 + H2O. Inhibited by ethoxyzolamide and dithiothreitol (in crude extracts upon expression in E.coli). In terms of biological role, reversible hydration of carbon dioxide. This bacteria encodes at least 3 CA enzymes. Essential for chemolithotrophic carbon dioxide fixation, supplies CO(2) to RuBisCO (ribulose bisphosphate carboxylase, cbbL-cbbS) in the carboxysome. This chain is Carboxysome shell carbonic anhydrase, found in Hydrogenovibrio crunogenus (strain DSM 25203 / XCL-2) (Thiomicrospira crunogena).